We begin with the raw amino-acid sequence, 271 residues long: Thymidine kinase (271 aa).

Residues 74-81 and 152-155 contribute to the ATP site; these read GPMFAGKT and DEAQ. E153 acts as the Proton acceptor in catalysis. Residue Y184 coordinates substrate. 2 residues coordinate Zn(2+): C209 and C212. Substrate is bound at residue Y237. Zn(2+) is bound at residue C241.

It belongs to the thymidine kinase family.

The enzyme catalyses thymidine + ATP = dTMP + ADP + H(+). The polypeptide is Thymidine kinase (TK) (Oryza sativa subsp. japonica (Rice)).